The primary structure comprises 213 residues: Adenylate kinase (213 aa).

Position 10-15 (10-15 (GAGKGT)) interacts with ATP. The NMP stretch occupies residues 30–59 (STGDMFRAAMANQTEMGVLAKSYIDKGDLV). AMP is bound by residues Thr31, Arg36, 57–59 (DLV), 86–89 (GYPR), and Gln93. The LID stretch occupies residues 127-160 (GRIINKKTGETFHKIFNPPVGDYKEEDFYQREDD). Residues Arg128 and 137-138 (TF) contribute to the ATP site. The AMP site is built by Arg157 and Arg168. Position 196 (Lys196) interacts with ATP.

It belongs to the adenylate kinase family. In terms of assembly, monomer.

The protein localises to the cytoplasm. The catalysed reaction is AMP + ATP = 2 ADP. It functions in the pathway purine metabolism; AMP biosynthesis via salvage pathway; AMP from ADP: step 1/1. Its function is as follows. Catalyzes the reversible transfer of the terminal phosphate group between ATP and AMP. Plays an important role in cellular energy homeostasis and in adenine nucleotide metabolism. The sequence is that of Adenylate kinase from Streptococcus equi subsp. zooepidemicus (strain H70).